A 128-amino-acid chain; its full sequence is 3-aminoacrylate deaminase RutC (128 aa).

The protein belongs to the RutC family. In terms of assembly, homotrimer.

The enzyme catalyses (Z)-3-aminoacrylate + H2O + H(+) = 3-oxopropanoate + NH4(+). Functionally, involved in pyrimidine catabolism. Catalyzes the deamination of 3-aminoacrylate to malonic semialdehyde, a reaction that can also occur spontaneously. RutC may facilitate the reaction and modulate the metabolic fitness, rather than catalyzing essential functions. The protein is 3-aminoacrylate deaminase RutC of Escherichia coli (strain SE11).